The sequence spans 1201 residues: MIGLFKDEWFNISILNDNLFLKRYCYESNNNNNNNNTLYTIIVPFDKSINPSQFDPSTINDYFIFLYKNTKKINLNSINKLQYKSNKKEILVSFDITYIHNSNNNNNNNNNKLKSVLISNSCSKKLNLFNNDIVHLKPIKKKLTVLQRVVLLANDNESFIESSNPSESSSSTTTINSKYLVNEEFRNYLVENSILFQSPNNIVIENHQKHKSFSYKVLECFPLLQGTVSNSTTIIIISPDDKILNTLPSNNNNNNNNNNNNNNNNNNNNNNNNNNNNNNNNKEEEVEEEEVEVEEEEKDNKLKLNNNLRLSNFIIHPIINISNNTTTKNEDIGDSNNLFHFTPSSKGILSNNKKFINISQLKSIPTEIDFEFDISKEYDYLVDCLVSLNTLKSLNLFNGSWIKIKNITNNNNNNNNKEYEIAIRIFSITSSLKLKDQVLYLPPISIFNLNIDYKNFLKLSNYEIISNQFELILLKSNKPNINNNNNNDSFPINYPTANRIKISRIKNQNSSGYKSYSHQLEKYFQKKRLLKQNDIIVISTKVNNEEELINSNNSNNNNNYNNNNNNNNNNNLVYFKVEIILCNQFENINGNQIYLIDKNTTSIIQEGSSNSMVPSKIESFYWRGGDQEESKDNSMVPLELIYENEFKTIVDLISPFLMGDKFSFDFNCTLLLNGPQGVGKRTLLNRVAKQMGIHVYEVDCYKLYDFVESKKDWNIRNVLEQASNSTPTLLILKNFEVLEQTAQSMQQEKKESNLSQTLINILKDINDSNTSNINSNKYPLIITVTVNSMDELSNKVRNWFKHEITLNSPDENQRFKILKYLTKNLPIDIGNTVSIKNLSIRTASFLNSNLRALIQRSSINALKRVLSIQQMMNDEIKPIEIYNCGFLVMGDDIQKSLSEMQEYQSSSIGAPKIPNVSWDDVGGLANVKSEIMDTIQLPLEHPHLFASGIGKRSGILLFGPPGTGKTLLAKAIATECSLNFLSVKGPELINMYIGESEKNIREIFNKARQAKPCVIFFDELDSLAPSRGNGADSGGVMDRVVSQLLAELDGMQKSSDVFIIGATNRPDLLDSSLMRPGRLDRLLYLGISSEKENQFKILQALTRKFNLADDVDLRKVVENCPMNLTGADFYALASDAMSNAFHERITASINGEINEEEQNQKLIVYQNHFIKAVNSLVPSVSLDELEYYHKVQKQFSGNNKS.

Residues Leu-247–Asn-300 are disordered. The segment covering Asn-250–Asn-280 has biased composition (low complexity). The segment covering Glu-284–Glu-297 has biased composition (acidic residues). Gly-959–Thr-966 serves as a coordination point for ATP.

The protein belongs to the AAA ATPase family. As to quaternary structure, interacts with PEX1; forming the PEX1-PEX6 AAA ATPase complex, which is composed of a heterohexamer formed by a trimer of PEX1-PEX6 dimers.

The protein resides in the cytoplasm. The protein localises to the cytosol. Its subcellular location is the peroxisome membrane. The enzyme catalyses ATP + H2O = ADP + phosphate + H(+). Its function is as follows. Component of the PEX1-PEX6 AAA ATPase complex, a protein dislocase complex that mediates the ATP-dependent extraction of the PEX5 receptor from peroxisomal membranes, an essential step for PEX5 recycling. Specifically recognizes PEX5 monoubiquitinated at 'Cys-11', and pulls it out of the peroxisome lumen through the PEX2-PEX10-PEX12 retrotranslocation channel. Extraction by the PEX1-PEX6 AAA ATPase complex is accompanied by unfolding of the TPR repeats and release of bound cargo from PEX5. The protein is Peroxisomal ATPase PEX6 (pex6) of Dictyostelium discoideum (Social amoeba).